Consider the following 225-residue polypeptide: ATP phosphoribosyltransferase (225 aa).

This sequence belongs to the ATP phosphoribosyltransferase family. Short subfamily. Heteromultimer composed of HisG and HisZ subunits.

The protein localises to the cytoplasm. The enzyme catalyses 1-(5-phospho-beta-D-ribosyl)-ATP + diphosphate = 5-phospho-alpha-D-ribose 1-diphosphate + ATP. The protein operates within amino-acid biosynthesis; L-histidine biosynthesis; L-histidine from 5-phospho-alpha-D-ribose 1-diphosphate: step 1/9. In terms of biological role, catalyzes the condensation of ATP and 5-phosphoribose 1-diphosphate to form N'-(5'-phosphoribosyl)-ATP (PR-ATP). Has a crucial role in the pathway because the rate of histidine biosynthesis seems to be controlled primarily by regulation of HisG enzymatic activity. The protein is ATP phosphoribosyltransferase of Herminiimonas arsenicoxydans.